Reading from the N-terminus, the 419-residue chain is C2 calcium-dependent domain-containing protein 4C (419 aa).

Disordered regions lie at residues 1–96 (MRKT…LASE), 115–136 (EDWT…MSLP), 151–225 (AESP…SPFG), and 247–300 (VSQL…HTVK). Positions 75 to 94 (LASPGPRRAPRSPRLPAKLA) are enriched in low complexity. The segment covering 186-196 (KGNGGDGGSRE) has biased composition (gly residues). Polar residues predominate over residues 212–225 (ESDTGSSAESSPFG). Phosphoserine occurs at positions 259, 261, and 270. In terms of domain architecture, C2 spans 303 to 419 (TRGSVRLLAE…LPLTSLLPFL (117 aa)).

The protein belongs to the C2CD4 family.

The polypeptide is C2 calcium-dependent domain-containing protein 4C (C2cd4c) (Mus musculus (Mouse)).